The sequence spans 1279 residues: ATP-dependent helicase/nuclease subunit A (1279 aa).

In terms of domain architecture, UvrD-like helicase ATP-binding spans 4–499 (TKWTDEQRQA…VKLFKNFRSR (496 aa)). 25-32 (AGAGAGKT) contacts ATP. The region spanning 526–853 (EEALKVGASY…RIMSIHKSKG (328 aa)) is the UvrD-like helicase C-terminal domain.

It belongs to the helicase family. AddA subfamily. In terms of assembly, heterodimer of AddA and AddB/RexB. The cofactor is Mg(2+).

It catalyses the reaction Couples ATP hydrolysis with the unwinding of duplex DNA by translocating in the 3'-5' direction.. It carries out the reaction ATP + H2O = ADP + phosphate + H(+). In terms of biological role, the heterodimer acts as both an ATP-dependent DNA helicase and an ATP-dependent, dual-direction single-stranded exonuclease. Recognizes the chi site generating a DNA molecule suitable for the initiation of homologous recombination. The AddA nuclease domain is required for chi fragment generation; this subunit has the helicase and 3' -&gt; 5' nuclease activities. The sequence is that of ATP-dependent helicase/nuclease subunit A from Clostridium botulinum (strain Loch Maree / Type A3).